A 684-amino-acid polypeptide reads, in one-letter code: Soluble guanylate cyclase gcy-32 (684 aa).

His-105 is a binding site for heme. Residues 396–432 adopt a coiled-coil conformation; that stretch reads DVEVNLQLEANNEQLETMTRELELERQKTDSILKDML. The 129-residue stretch at 454-582 folds into the Guanylate cyclase domain; sequence TVMFCDLPAF…ETVTLASQME (129 aa). The Mg(2+) site is built by Asp-459 and Asp-503.

It belongs to the adenylyl cyclase class-4/guanylyl cyclase family. Heterodimer; with other soluble guanylate cyclases. The cofactor is heme. In terms of tissue distribution, expressed in a small number of neurons, corresponding to URX, AQR and PQR neurons.

The protein resides in the cytoplasm. The catalysed reaction is GTP = 3',5'-cyclic GMP + diphosphate. With respect to regulation, may be regulated by molecular oxygen. Probably not activated by nitric oxide (NO). Its function is as follows. Synthesizes cyclic GMP (cGMP) from GTP. Influences aerotaxis responses, aggregation and bordering behaviors (gathering around the edge of a bacterial lawn) in combination with other soluble guanylate cyclases. This is Soluble guanylate cyclase gcy-32 (gcy-32) from Caenorhabditis elegans.